We begin with the raw amino-acid sequence, 241 residues long: Chromosome partition protein MukE (241 aa).

Residues 207–241 form a disordered region; that stretch reads DGEAATPDSLSQEKSAVKNDEEIEDELDEGLGEEE. Over residues 227–241 the composition is skewed to acidic residues; the sequence is EEIEDELDEGLGEEE.

This sequence belongs to the MukE family. As to quaternary structure, interacts, and probably forms a ternary complex, with MukF and MukB. The complex formation is stimulated by calcium or magnesium.

The protein resides in the cytoplasm. Its subcellular location is the nucleoid. Functionally, involved in chromosome condensation, segregation and cell cycle progression. May participate in facilitating chromosome segregation by condensation DNA from both sides of a centrally located replisome during cell division. Probably acts via its interaction with MukB and MukF. In Mannheimia succiniciproducens (strain KCTC 0769BP / MBEL55E), this protein is Chromosome partition protein MukE.